The following is a 215-amino-acid chain: Small ribosomal subunit protein uS3 (215 aa).

The KH type-2 domain occupies 39–109 (IRKFIKKRLE…EVLVDVKEVK (71 aa)).

This sequence belongs to the universal ribosomal protein uS3 family. As to quaternary structure, part of the 30S ribosomal subunit. Forms a tight complex with proteins S10 and S14.

Functionally, binds the lower part of the 30S subunit head. Binds mRNA in the 70S ribosome, positioning it for translation. The polypeptide is Small ribosomal subunit protein uS3 (Methylacidiphilum infernorum (isolate V4) (Methylokorus infernorum (strain V4))).